The primary structure comprises 130 residues: P antigen family member 5 (130 aa).

Disordered stretches follow at residues 1–88 (MQAP…TDVE) and 101–130 (DAPG…EGQL). Residues 14-26 (TREEVRDMSEHVT) show a composition bias toward basic and acidic residues. Residues 27–42 (RSQSSERGNDQESSQP) show a composition bias toward polar residues. Thr-113 and Thr-116 each carry phosphothreonine.

It belongs to the GAGE family.

The sequence is that of P antigen family member 5 (PAGE5) from Homo sapiens (Human).